The primary structure comprises 276 residues: NADH-cytochrome b5 reductase 2 (276 aa).

The 113-residue stretch at 15 to 127 (EAKYPLPLIE…RGPTGRLFYN (113 aa)) folds into the FAD-binding FR-type domain. Lys-17 is subject to N6-acetyllysine. The residue at position 18 (Tyr-18) is a Phosphotyrosine. Residues 107-137 (ENMKIGDTILFRGPTGRLFYNEPGTLLIKTD) and 146-181 (LVHHLGMIAGGTGITPMLQLIRHITKDTSDGTRMSL) each bind FAD.

This sequence belongs to the flavoprotein pyridine nucleotide cytochrome reductase family. FAD serves as cofactor.

It catalyses the reaction 2 Fe(III)-[cytochrome b5] + NADH = 2 Fe(II)-[cytochrome b5] + NAD(+) + H(+). NADH-cytochrome b5 reductases are involved in desaturation and elongation of fatty acids, cholesterol biosynthesis, drug metabolism, and, in erythrocyte, methemoglobin reduction. Responsible for NADH-dependent lucigenin chemiluminescence in spermatozoa by reducing both lucigenin and 2-[4-iodophenyl]-3-[4-nitrophenyl]-5-[2,4-disulfophenyl]-2H tetrazolium monosodium salt (WST-1). The protein is NADH-cytochrome b5 reductase 2 (Cyb5r2) of Rattus norvegicus (Rat).